A 347-amino-acid chain; its full sequence is MKKDLDEIDTDIVTLSSFILQEQRRYNQKHKNEEGKPCIIQEASGELSLLLNSLQFSFKFIANTIRKAELVNLIGLSGIVNSTGDEQKKLDKICNDIFITAMKSNGCCKLIVSEEEEDLIVVDSNGSYAVTCDPIDGSSNIDAGVSVGTIFGIYKLRPGSQGDISDVLRPGKEMVAAGYTMYGASAHLLLTTGHRVNGFTLDTDIGEFILTHRNMKMPLQHSIYSINEGYTAFWDEKIARFIAHLKESTPDKKPYSARYIGSMVADMHRTILYGGLFAYPCSKGNNGKLRLLYECFPMAFLVEQAGGIAVNDKGDRILDLVPKTLHGKSSIWLGSKHEVEEYINFIK.

AMP is bound by residues 19 to 23 and 44 to 48; these read ILQEQ and SGELS. Residues aspartate 85 and glutamate 114 each coordinate Mg(2+). 127-128 serves as a coordination point for AMP; the sequence is SY. Residues aspartate 133, isoleucine 135, and aspartate 136 each contribute to the Mg(2+) site. 136–139 provides a ligand contact to substrate; sequence DGSS. Lysine 155 is a binding site for AMP. Residues 227–230, 258–263, tyrosine 279, and 288–290 contribute to the substrate site; these read NEGY, RYIGSM, and KLR. Glutamate 294 serves as a coordination point for Mg(2+).

It belongs to the FBPase class 1 family. Homotetramer. Mg(2+) is required as a cofactor.

The catalysed reaction is beta-D-fructose 1,6-bisphosphate + H2O = beta-D-fructose 6-phosphate + phosphate. It participates in carbohydrate biosynthesis; gluconeogenesis. Subject to complex allosteric regulation. The enzyme can assume an active R-state, or an inactive T-state. Intermediate conformations may exist. AMP acts as allosteric inhibitor. AMP binding affects the turnover of bound substrate and not the affinity for substrate. In Schizosaccharomyces pombe (strain 972 / ATCC 24843) (Fission yeast), this protein is Fructose-1,6-bisphosphatase (fbp1).